The chain runs to 372 residues: 3-dehydroquinate synthase (372 aa).

NAD(+) is bound by residues 116–120 (GVVGD), 140–141 (TT), lysine 153, lysine 162, and 180–183 (TLNT). 3 residues coordinate Zn(2+): glutamate 195, histidine 260, and histidine 277.

Belongs to the sugar phosphate cyclases superfamily. Dehydroquinate synthase family. Requires Co(2+) as cofactor. The cofactor is Zn(2+). NAD(+) is required as a cofactor.

It is found in the cytoplasm. It catalyses the reaction 7-phospho-2-dehydro-3-deoxy-D-arabino-heptonate = 3-dehydroquinate + phosphate. It functions in the pathway metabolic intermediate biosynthesis; chorismate biosynthesis; chorismate from D-erythrose 4-phosphate and phosphoenolpyruvate: step 2/7. Functionally, catalyzes the conversion of 3-deoxy-D-arabino-heptulosonate 7-phosphate (DAHP) to dehydroquinate (DHQ). This is 3-dehydroquinate synthase from Prochlorococcus marinus (strain MIT 9303).